The primary structure comprises 485 residues: Cysteine--tRNA ligase (485 aa).

C29 serves as a coordination point for Zn(2+). A 'HIGH' region motif is present at residues 31–41; the sequence is ATVQGMPHVGH. The tract at residues 174–198 is disordered; the sequence is QRVEDMQDAPDADPRGKRDPHDFAL. The segment covering 185 to 197 has biased composition (basic and acidic residues); sequence ADPRGKRDPHDFA. Residues C227, H252, and E256 each contribute to the Zn(2+) site. The 'KMSKS' region signature appears at 283–287; that stretch reads KMSKS. An ATP-binding site is contributed by K286.

The protein belongs to the class-I aminoacyl-tRNA synthetase family. Monomer. Zn(2+) serves as cofactor.

The protein resides in the cytoplasm. The catalysed reaction is tRNA(Cys) + L-cysteine + ATP = L-cysteinyl-tRNA(Cys) + AMP + diphosphate. The sequence is that of Cysteine--tRNA ligase from Micrococcus luteus (strain ATCC 4698 / DSM 20030 / JCM 1464 / CCM 169 / CCUG 5858 / IAM 1056 / NBRC 3333 / NCIMB 9278 / NCTC 2665 / VKM Ac-2230) (Micrococcus lysodeikticus).